The chain runs to 270 residues: NADPH-dependent 7-cyano-7-deazaguanine reductase (270 aa).

79–81 (IES) provides a ligand contact to substrate. Position 81-82 (81-82 (SK)) interacts with NADPH. The active-site Thioimide intermediate is the Cys177. The active-site Proton donor is Asp184. 216–217 (HE) is a binding site for substrate. 245–246 (RG) provides a ligand contact to NADPH.

Belongs to the GTP cyclohydrolase I family. QueF type 2 subfamily. Homodimer.

Its subcellular location is the cytoplasm. It carries out the reaction 7-aminomethyl-7-carbaguanine + 2 NADP(+) = 7-cyano-7-deazaguanine + 2 NADPH + 3 H(+). The protein operates within tRNA modification; tRNA-queuosine biosynthesis. In terms of biological role, catalyzes the NADPH-dependent reduction of 7-cyano-7-deazaguanine (preQ0) to 7-aminomethyl-7-deazaguanine (preQ1). In Acinetobacter baumannii (strain ATCC 17978 / DSM 105126 / CIP 53.77 / LMG 1025 / NCDC KC755 / 5377), this protein is NADPH-dependent 7-cyano-7-deazaguanine reductase.